The primary structure comprises 533 residues: Protein disulfide isomerase-like 1-5 (533 aa).

The signal sequence occupies residues 1–22 (MRARRVVAAAAVLLLFAVVAVA). 2 Thioredoxin domains span residues 51 to 196 (LGGG…KDQT) and 387 to 516 (LLEG…EKLQ). The Nucleophile role is filled by Cys-97. Asn-151 is a glycosylation site (N-linked (GlcNAc...) asparagine). Residues Cys-436 and Cys-439 each act as nucleophile in the active site. Cys-436 and Cys-439 are disulfide-bonded. Positions 530–533 (KDEL) match the Prevents secretion from ER motif.

This sequence belongs to the protein disulfide isomerase family.

The protein resides in the endoplasmic reticulum lumen. The enzyme catalyses Catalyzes the rearrangement of -S-S- bonds in proteins.. Acts as a protein-folding catalyst that interacts with nascent polypeptides to catalyze the formation, isomerization, and reduction or oxidation of disulfide bonds. May play a role in storage protein biogenesis. In Oryza sativa subsp. japonica (Rice), this protein is Protein disulfide isomerase-like 1-5 (PDIL1-5).